Reading from the N-terminus, the 877-residue chain is DNA polymerase I (877 aa).

A 5'-3' exonuclease domain is found at 177–270 (TPAQFIDLKA…LEDLVYSGPD (94 aa)). A 3'-5' exonuclease domain is found at 302–465 (DFTIVDQISQ…TEPILLEKLS (164 aa)).

This sequence belongs to the DNA polymerase type-A family. In terms of assembly, single-chain monomer with multiple functions.

It catalyses the reaction DNA(n) + a 2'-deoxyribonucleoside 5'-triphosphate = DNA(n+1) + diphosphate. Its function is as follows. In addition to polymerase activity, this DNA polymerase exhibits 3'-5' and 5'-3' exonuclease activity. This chain is DNA polymerase I (polA), found in Streptococcus pneumoniae serotype 4 (strain ATCC BAA-334 / TIGR4).